An 89-amino-acid chain; its full sequence is Small ribosomal subunit protein uS15 (89 aa).

It belongs to the universal ribosomal protein uS15 family. As to quaternary structure, part of the 30S ribosomal subunit. Forms a bridge to the 50S subunit in the 70S ribosome, contacting the 23S rRNA.

In terms of biological role, one of the primary rRNA binding proteins, it binds directly to 16S rRNA where it helps nucleate assembly of the platform of the 30S subunit by binding and bridging several RNA helices of the 16S rRNA. Its function is as follows. Forms an intersubunit bridge (bridge B4) with the 23S rRNA of the 50S subunit in the ribosome. The polypeptide is Small ribosomal subunit protein uS15 (Vibrio cholerae serotype O1 (strain ATCC 39541 / Classical Ogawa 395 / O395)).